Here is a 785-residue protein sequence, read N- to C-terminus: MEKKVEAILEFDKIKKQLAEFASSSLGEQAIYELAPATDFQVVQKAQLETEEGAKIIRLRGSAPITGLTDVFAHLKRLEIGGDLNGLEIYQIGSNLRVSRQMKNFMNDLLEIGVEIPLLGALSDELLVLKDVEEDIAISIDESGKILDTASEALSSIRRTLRRTEDRVREKLESYLRDRNASKMLSDAVITIRNDRYVIPVKQEYKGHYGGIVHDQSASGQTLFIEPQSVVDLNNERKALQAKEKQEIERILAEISASLAGWINEIHHNTFILGRFDFILAKARFGKALKAVTPHLSDTGIVHLIAARHPLLDAEKVVANDIYLGEDFSTIVITGPNTGGKTITLKTLGLLTLMAQSGLQIPAQEDSTIAVFENVFADIGDEQSIEQSLSTFSSHMTNIVSILEKVNHKSLILYDELGAGTDPQEGAALAIAILDASHKKGASVVATTHYPELKAYGYNRAHATNASVEFNVETLSPTYKLLIGVPGRSNAFDISRRLGLSESIITEARSLVDTESADLNDMISSLEEKRNLAEREYEEARELARGADALLKDLQKEITNYYQQKDKLLEQANEKAAGIVEKAETEAEEIIHELRTMQLNGAAGIKEHELIDAKTRLGKAKPKTINKAIPKAPKQKPHVFQAGDNVRVLSLGQKGTLLNKISDKEWNVQIGIIKMKIKTTDLEYIEPEKPKKQRIITSVHSSDSPAKSELDLRGERYEDAIQKVDKYLDEALLAGYPQVAIIHGKGTGALRTGVTEYLKNHRMVKSIRFGAAAEGGNGVTIVEFK.

335–342 provides a ligand contact to ATP; it reads GPNTGGKT. Residues 710–785 enclose the Smr domain; the sequence is LDLRGERYED…GNGVTIVEFK (76 aa).

It belongs to the DNA mismatch repair MutS family. MutS2 subfamily. Homodimer. Binds to stalled ribosomes, contacting rRNA.

Endonuclease that is involved in the suppression of homologous recombination and thus may have a key role in the control of bacterial genetic diversity. Its function is as follows. Acts as a ribosome collision sensor, splitting the ribosome into its 2 subunits. Detects stalled/collided 70S ribosomes which it binds and splits by an ATP-hydrolysis driven conformational change. Acts upstream of the ribosome quality control system (RQC), a ribosome-associated complex that mediates the extraction of incompletely synthesized nascent chains from stalled ribosomes and their subsequent degradation. Probably generates substrates for RQC. This chain is Endonuclease MutS2, found in Listeria innocua serovar 6a (strain ATCC BAA-680 / CLIP 11262).